The sequence spans 257 residues: Global transcriptional regulator CodY (257 aa).

Positions 1–155 are GAF domain; it reads MSLLSKTREL…AATVIGMEIL (155 aa). Residues Val-22, Phe-24, Ser-43, Arg-44, Arg-45, and Lys-47 each contribute to the GTP site. L-isoleucine is bound by residues Arg-61, Thr-96, and Phe-98. 2 residues coordinate GTP: Glu-153 and Lys-158. Residues 203–222 constitute a DNA-binding region (H-T-H motif); that stretch reads ASKVADRVGITRSVIVNALR.

Belongs to the CodY family. Homodimer. Homotetramer. May form homodimers under conditions in which energy sources are sufficient (active state) and homotetramers under insufficient nutrient conditions (inactive state).

It localises to the cytoplasm. Its activity is regulated as follows. Activity of CodY is modulated by interaction with two types of effectors: the branched-chain amino acids (BCAAs) leucine, isoleucine and valine, which are signals of the nutritional status of the cell, and GTP, which may signal the energetic status of the cell. Its function is as follows. DNA-binding global transcriptional regulator which is involved in the adaptive response to starvation and acts by directly or indirectly controlling the expression of numerous genes in response to nutrient availability. During rapid exponential growth, CodY is highly active and represses genes whose products allow adaptation to nutrient depletion. This Staphylococcus aureus (strain Mu3 / ATCC 700698) protein is Global transcriptional regulator CodY.